Reading from the N-terminus, the 262-residue chain is Tryptophan synthase alpha chain (262 aa).

Catalysis depends on proton acceptor residues Glu48 and Asp59.

This sequence belongs to the TrpA family. As to quaternary structure, tetramer of two alpha and two beta chains.

It catalyses the reaction (1S,2R)-1-C-(indol-3-yl)glycerol 3-phosphate + L-serine = D-glyceraldehyde 3-phosphate + L-tryptophan + H2O. It participates in amino-acid biosynthesis; L-tryptophan biosynthesis; L-tryptophan from chorismate: step 5/5. In terms of biological role, the alpha subunit is responsible for the aldol cleavage of indoleglycerol phosphate to indole and glyceraldehyde 3-phosphate. This chain is Tryptophan synthase alpha chain, found in Helicobacter pylori (strain G27).